The sequence spans 208 residues: Cytochrome c oxidase assembly protein CtaG (208 aa).

Over 1 to 19 (MSPPLPQAPQQPAPRRGLG) the chain is Cytoplasmic. The chain crosses the membrane as a helical; Signal-anchor for type II membrane protein span at residues 20–42 (HDTAVAAVCGLVVALMVGASFAA). Residues 43-208 (VPFYNWFCRT…SEPAPRKGNL (166 aa)) are Periplasmic-facing.

This sequence belongs to the COX11/CtaG family.

It is found in the cell inner membrane. In terms of biological role, exerts its effect at some terminal stage of cytochrome c oxidase synthesis, probably by being involved in the insertion of the copper B into subunit I. This is Cytochrome c oxidase assembly protein CtaG from Rhodopseudomonas palustris (strain TIE-1).